The following is a 123-amino-acid chain: Ribonuclease P protein component (123 aa).

This sequence belongs to the RnpA family. In terms of assembly, consists of a catalytic RNA component (M1 or rnpB) and a protein subunit.

It catalyses the reaction Endonucleolytic cleavage of RNA, removing 5'-extranucleotides from tRNA precursor.. In terms of biological role, RNaseP catalyzes the removal of the 5'-leader sequence from pre-tRNA to produce the mature 5'-terminus. It can also cleave other RNA substrates such as 4.5S RNA. The protein component plays an auxiliary but essential role in vivo by binding to the 5'-leader sequence and broadening the substrate specificity of the ribozyme. This is Ribonuclease P protein component from Streptomyces avermitilis (strain ATCC 31267 / DSM 46492 / JCM 5070 / NBRC 14893 / NCIMB 12804 / NRRL 8165 / MA-4680).